Reading from the N-terminus, the 69-residue chain is VLIIAVLFLTACQLTTAETYSRGRQKHRARRSTDKNSKWTRECTDSGGACNSHDQCCNEFCSTATRTCI.

An N-terminal signal peptide occupies residues 1–17 (VLIIAVLFLTACQLTTA). The propeptide occupies 18–41 (ETYSRGRQKHRARRSTDKNSKWTR). 3 cysteine pairs are disulfide-bonded: cysteine 43–cysteine 57, cysteine 50–cysteine 61, and cysteine 56–cysteine 68.

Belongs to the conotoxin O1 superfamily. Expressed by the venom duct.

Its subcellular location is the secreted. The sequence is that of Conotoxin Eb6.14 (E1) from Conus ebraeus (Hebrew cone).